The primary structure comprises 588 residues: Probable G-protein coupled receptor 162 (588 aa).

Residues 1–17 (MARGGLGAEEASLRSNA) are Extracellular-facing. Residues 18-38 (LSWLACGLLALLANAWIILSI) traverse the membrane as a helical segment. Over 39-49 (SAKQQKHKPLE) the chain is Cytoplasmic. Residues 50–70 (LLLCFLAGTHILMAAVPLTTF) traverse the membrane as a helical segment. Over 71–91 (AVVQLRRQASSDYDWNESICK) the chain is Extracellular. N-linked (GlcNAc...) asparagine glycosylation occurs at Asn86. The helical transmembrane segment at 92-112 (VFVSTYYTLALATCFTVASLS) threads the bilayer. Over 113–133 (YHRMWMVRWPVNYRLSNAKKQ) the chain is Cytoplasmic. The chain crosses the membrane as a helical span at residues 134 to 154 (ALHAVMGIWMVSFILSTLPSI). The Extracellular segment spans residues 155–174 (GWHNNGERYYARGCQFIVSK). A helical membrane pass occupies residues 175–195 (IGLGFGVCFSLLLLGGIVMGL). At 196–275 (VCVAITFYQT…SLQVTNLVSA (80 aa)) the chain is on the cytoplasmic side. The chain crosses the membrane as a helical span at residues 276–296 (IVFLYDSLTGVPILVVSFFSL). Residues 297–303 (KSDSAPP) are Extracellular-facing. Residues 304–324 (WMVLAVLWCSMAQTLLLPSFI) traverse the membrane as a helical segment. The Cytoplasmic segment spans residues 325 to 588 (WSCERYRADV…GNPIFPQLTL (264 aa)). Residues Ser413 and Ser435 each carry the phosphoserine modification. Disordered stretches follow at residues 511–545 (ETPLPSPTASPGPSPRRPRPLGFSPRRLSLGSPDS) and 561–588 (SLTGSEGSSRAWGRPWGPGNPIFPQLTL). Over residues 514 to 525 (LPSPTASPGPSP) the composition is skewed to pro residues. The span at 530 to 540 (PLGFSPRRLSL) shows a compositional bias: low complexity.

Belongs to the G-protein coupled receptor 1 family.

Its subcellular location is the cell membrane. Its function is as follows. Orphan receptor. The sequence is that of Probable G-protein coupled receptor 162 (Gpr162) from Mus musculus (Mouse).